Consider the following 195-residue polypeptide: Peptidyl-tRNA hydrolase (195 aa).

Tyr17 provides a ligand contact to tRNA. The active-site Proton acceptor is the His22. TRNA is bound by residues Phe68, Asn70, and Asn116.

The protein belongs to the PTH family. As to quaternary structure, monomer.

It is found in the cytoplasm. It catalyses the reaction an N-acyl-L-alpha-aminoacyl-tRNA + H2O = an N-acyl-L-amino acid + a tRNA + H(+). In terms of biological role, hydrolyzes ribosome-free peptidyl-tRNAs (with 1 or more amino acids incorporated), which drop off the ribosome during protein synthesis, or as a result of ribosome stalling. Catalyzes the release of premature peptidyl moieties from peptidyl-tRNA molecules trapped in stalled 50S ribosomal subunits, and thus maintains levels of free tRNAs and 50S ribosomes. In Shewanella denitrificans (strain OS217 / ATCC BAA-1090 / DSM 15013), this protein is Peptidyl-tRNA hydrolase.